We begin with the raw amino-acid sequence, 118 residues long: MATQFQGSAIIRLNGKEWPSDNDGTLTPGGKERETVKGSRVYGFSEKPTEAMVECTVFNCAETDVMELQNITNATVEFETDIGQVYLLPGAWTVETGTLSADGKIKLKMASIECKRVQ.

The segment at 12-32 is disordered; it reads RLNGKEWPSDNDGTLTPGGKE.

The protein to phage Mu protein M.

The chain is Mu-like prophage FluMu tail tube protein from Haemophilus influenzae (strain ATCC 51907 / DSM 11121 / KW20 / Rd).